The following is a 398-amino-acid chain: Beta-1,4-galactosyltransferase 1 (398 aa).

Residues 1 to 24 (MRLREPLLSGSAAMPGASLQRACR) are Cytoplasmic-facing. Residues 25-44 (LLVAVCALHLGVTLVYYLAG) form a helical; Signal-anchor for type II membrane protein membrane-spanning segment. At 45–398 (RDLSRLPQLV…QITVDIGTPS (354 aa)) the chain is on the lumenal side. Polar residues predominate over residues 61–76 (QGGSNSAAAIGQSSGE). The segment at 61–117 (QGGSNSAAAIGQSSGELRTGGARPPPPLGASSQPRPGGDSSPVVDSGPGPASNLTSV) is disordered. N-linked (GlcNAc...) asparagine glycosylation is present at Asn113. A disulfide bond links Cys130 and Cys172. UDP-alpha-D-galactose is bound by residues 183 to 187 (PFRNR), 222 to 224 (FNR), 249 to 250 (VD), and Trp310. Cys243 and Cys262 are disulfide-bonded. A Mn(2+)-binding site is contributed by Asp250. 312–315 (GEDD) is a binding site for N-acetyl-D-glucosamine. Position 343 (His343) interacts with Mn(2+). 343-346 (HSRD) is a UDP-alpha-D-galactose binding site. Position 355 (Arg355) interacts with N-acetyl-D-glucosamine.

Belongs to the glycosyltransferase 7 family. Homodimer; and heterodimer with alpha-lactalbumin to form lactose synthase. Interacts (via N-terminal cytoplasmic domain) with UBE2Q1 (via N-terminus); the interaction is direct. Mn(2+) serves as cofactor. Post-translationally, the soluble form derives from the membrane forms by proteolytic processing. As to expression, ubiquitously expressed, but at very low levels in fetal and adult brain.

The protein resides in the golgi apparatus. Its subcellular location is the golgi stack membrane. The protein localises to the cell membrane. It is found in the cell surface. It localises to the cell projection. The protein resides in the filopodium. Its subcellular location is the secreted. The enzyme catalyses D-glucose + UDP-alpha-D-galactose = lactose + UDP + H(+). It catalyses the reaction an N-acetyl-beta-D-glucosaminyl derivative + UDP-alpha-D-galactose = a beta-D-galactosyl-(1-&gt;4)-N-acetyl-beta-D-glucosaminyl derivative + UDP + H(+). It carries out the reaction N-acetyl-D-glucosamine + UDP-alpha-D-galactose = beta-D-galactosyl-(1-&gt;4)-N-acetyl-D-glucosamine + UDP + H(+). The catalysed reaction is a beta-D-GlcNAc-(1-&gt;3)-beta-D-Gal-(1-&gt;4)-beta-D-Glc-(1&lt;-&gt;1)-Cer(d18:1(4E)) + UDP-alpha-D-galactose = a neolactoside nLc4Cer(d18:1(4E)) + UDP + H(+). The enzyme catalyses a beta-D-glucosylceramide + UDP-alpha-D-galactose = a beta-D-galactosyl-(1-&gt;4)-beta-D-glucosyl-(1&lt;-&gt;1)-ceramide + UDP + H(+). It catalyses the reaction a neolactoside IV(3)-beta-GlcNAc-nLc4Cer + UDP-alpha-D-galactose = a neolactoside nLc6Cer + UDP + H(+). The protein operates within protein modification; protein glycosylation. Functionally, the Golgi complex form catalyzes the production of lactose in the lactating mammary gland and could also be responsible for the synthesis of complex-type N-linked oligosaccharides in many glycoproteins as well as the carbohydrate moieties of glycolipids. In terms of biological role, the cell surface form functions as a recognition molecule during a variety of cell to cell and cell to matrix interactions, as those occurring during development and egg fertilization, by binding to specific oligosaccharide ligands on opposing cells or in the extracellular matrix. The polypeptide is Beta-1,4-galactosyltransferase 1 (Homo sapiens (Human)).